The following is a 377-amino-acid chain: Prostaglandin E synthase 2 (377 aa).

At 1-65 the chain is on the lumenal side; sequence MAAACTRTLG…LAAPVRGSGR (65 aa). The chain crosses the membrane as a helical span at residues 66 to 83; sequence VLGCAFLLGGGFGLYQTI. The GST N-terminal domain maps to 105-182; that stretch reads LKLTLYQYKT…ALKTYISSKD (78 aa). Residues Val-153 and 166–167 each bind glutathione; that span reads DS. The GST C-terminal domain occupies 266-377; sequence YIVREGKFGS…RMQKATQHVS (112 aa).

This sequence belongs to the GST superfamily. As to quaternary structure, homodimer.

It is found in the golgi apparatus membrane. It catalyses the reaction prostaglandin H2 = prostaglandin E2. It carries out the reaction prostaglandin H2 = (12S)-hydroxy-(5Z,8E,10E)-heptadecatrienoate + malonaldehyde. Its pathway is lipid metabolism; prostaglandin biosynthesis. Isomerase activity is increased by sulfhydril compounds. Dithiothreitol (DTT) is most effective, followed by glutathione (GSH) and 2-mercaptoethanol. Its function is as follows. Isomerase that catalyzes the conversion of PGH2 into the more stable prostaglandin E2 (PGE2) (in vitro). The biological function and the GSH-dependent property of PTGES2 is still under debate. In vivo, PTGES2 could form a complex with GSH and heme and would not participate in PGE2 synthesis but would catalyze the degradation of prostaglandin E2 H2 (PGH2) to 12(S)-hydroxy-5(Z),8(E),10(E)-heptadecatrienoic acid (HHT) and malondialdehyde (MDA). In Danio rerio (Zebrafish), this protein is Prostaglandin E synthase 2 (ptges2).